The primary structure comprises 275 residues: Methylglyoxal reductase DkgA (275 aa).

Residue Tyr-51 is the Proton donor of the active site. His-107 is a binding site for substrate. 187 to 241 contacts NADP(+); sequence SPLAQGGKGVFDQKVIRDLADKYGKTPAQIVIRWHLDSGLVVIPKSVTPSRIAEN.

Belongs to the aldo/keto reductase family. As to quaternary structure, monomer.

It is found in the cytoplasm. The enzyme catalyses hydroxyacetone + NADP(+) = methylglyoxal + NADPH + H(+). In terms of biological role, aldo-keto reductase that significantly contributes to cellular methylglyoxal detoxification by catalyzing the NADPH-dependent conversion of methylglyoxal to acetol. The chain is Methylglyoxal reductase DkgA from Escherichia coli O157:H7.